The following is a 419-amino-acid chain: Tetraspanning orphan receptor (419 aa).

Over 1–28 (MPRAPALLTNDARHQFTCCLCLHVRTGT) the chain is Cytoplasmic. Residues 29–49 (IIFGITQIIIQLVFISFLFLM) form a helical membrane-spanning segment. Residues 50 to 165 (TFNPRLIPED…EVKIKHFSPY (116 aa)) lie on the Extracellular side of the membrane. A helical membrane pass occupies residues 166-186 (IAVCVTTFSLAFCCFMVHGAI). At 187–193 (TKQPTHL) the chain is on the cytoplasmic side. A helical membrane pass occupies residues 194–214 (LPFFFIQVFDLIICLIHILGF). At 215–240 (MSSTSDLRLMIHTKTGPIYIKSTGFT) the chain is on the extracellular side. The helical transmembrane segment at 241-261 (FIILSISCMMLAFKAYCLGMV) threads the bilayer. At 262-419 (WDCYKYLMLN…SAPSNAHSSC (158 aa)) the chain is on the cytoplasmic side. Residues 303 to 316 (NNSIGNSGSPNEPN) are compositionally biased toward low complexity. The segment at 303–328 (NNSIGNSGSPNEPNTRPRPEPITYDP) is disordered.

Interacts (via N-terminal extracellular domain) with human C2a. In terms of processing, phosphorylated on tyrosine residues.

It is found in the cell membrane. In terms of biological role, cell surface receptor that binds to human complement C2a protein. This results in inhibition of the classical and lectin pathways of complement activation, probably due to interference with binding of C2a to C4b and interference with cleavage by C1 or MASP2 such that C3 convertase cannot be formed. This infers resistance to complement-mediated cell lysis, allowing parasite survival and infection. This is Tetraspanning orphan receptor from Schistosoma mansoni (Blood fluke).